Reading from the N-terminus, the 370-residue chain is Platelet-derived growth factor D (370 aa).

The N-terminal stretch at 1-18 (MHRLIFVCTLVCANFCSC) is a signal peptide. The CUB domain maps to 52–170 (RDETIQVRGN…PGFKIYYSLL (119 aa)). Cys109 and Cys131 form a disulfide bridge. Asn276 carries N-linked (GlcNAc...) asparagine glycosylation. Disulfide bonds link Cys302–Cys360 and Cys306–Cys362.

This sequence belongs to the PDGF/VEGF growth factor family. As to quaternary structure, homodimer; disulfide-linked. Interacts with PDGFRB homodimers, and with heterodimers formed by PDGFRA and PDGFRB. Activated by proteolytic cleavage. Proteolytic removal of the N-terminal CUB domain releasing the core domain is necessary for unmasking the receptor-binding epitopes of the core domain. Cleavage after Arg-247 or Arg-249 by urokinase plasminogen activator gives rise to the active form.

The protein localises to the secreted. Functionally, growth factor that plays an essential role in the regulation of embryonic development, cell proliferation, cell migration, survival and chemotaxis. Potent mitogen for cells of mesenchymal origin. Plays an important role in wound healing. Induces macrophage recruitment, increased interstitial pressure, and blood vessel maturation during angiogenesis. Can initiate events that lead to a mesangial proliferative glomerulonephritis, including influx of monocytes and macrophages and production of extracellular matrix. This Pongo abelii (Sumatran orangutan) protein is Platelet-derived growth factor D (PDGFD).